Reading from the N-terminus, the 363-residue chain is GDSL esterase/lipase At1g29670 (363 aa).

The N-terminal stretch at 1–24 is a signal peptide; it reads MESYLTKWCVVLVLLCFGFSVVKA. Serine 39 acts as the Nucleophile in catalysis. Active-site residues include aspartate 327 and histidine 330.

This sequence belongs to the 'GDSL' lipolytic enzyme family.

The protein localises to the secreted. The sequence is that of GDSL esterase/lipase At1g29670 from Arabidopsis thaliana (Mouse-ear cress).